A 409-amino-acid polypeptide reads, in one-letter code: MEEGSSGGSGSSDSNAGGSGGVQQRELERMAEVLVTGEQLRLRLHEEKVIKDRRHHLKTYPNCFVAKELIDWLIEHKEASDRETAIKLMQKLADRGIIHHVCDEHKEFKDVKLFYRFRKDDGTFALDSEVKAFMRGQRLYEKLMSPETTLLQPREEEGVKYERTFMASEFLDWLVQEGEATTRKEAEQLCHRLMDHGIIQHVSNKHPFVDSNLLYQFRMNFRRRRRLMELLNETSPSSQETHDSPFCLRKQSHDSRKSTSFMSVSPSKEIKIVSAVRRSSMSSCGSSGYFSSSPTLSSSPPVLCNPKSVLKRPVTSEELLTPGAPYARKTFTIVGDAVGWGFVVRGSKPCHIQAVDPSGPAAAAGMKVCQFVVSVNGLNVLNVDYRTVSNLILTGPRTIVMEVMEELDC.

N-acetylmethionine is present on methionine 1. A compositionally biased stretch (gly residues) spans methionine 1 to glycine 10. The segment at methionine 1 to glutamine 23 is disordered. DEP domains lie at threonine 36–lysine 119 and proline 146–methionine 219. Positions phenylalanine 217 to serine 235 match the DDEX motif motif. Serine 235 carries the phosphoserine modification. Position 241 is a phosphothreonine (threonine 241). Residues serine 244 and serine 258 each carry the phosphoserine modification. Threonine 259 carries the phosphothreonine modification. Phosphoserine is present on residues serine 263, serine 265, serine 280, serine 282, serine 283, serine 286, and serine 287. The short motif at serine 286–serine 291 is the BetaTrCP degron motif element. Tyrosine 289 carries the phosphotyrosine modification. A phosphoserine mark is found at serine 291 and serine 293. Threonine 295 carries the phosphothreonine modification. A phosphoserine mark is found at serine 297, serine 298, and serine 299. The region spanning threonine 330–leucine 407 is the PDZ domain.

As to quaternary structure, associated component of the mechanistic target of rapamycin complex 1 (mTORC1) which contains MTOR, MLST8 and RPTOR. Associated component of the mechanistic target of rapamycin complex 2 (mTORC2) which contains MTOR, MLST8, PROTOR1, RICTOR, MAPKAP1 and DEPTOR. Interacts (via PDZ domain) with MTOR; interacts with MTOR within both mTORC1 and mTORC2. Interacts (via PDZ domain) with MINAR1 (via N-terminus). Interacts with SIK3. Post-translationally, phosphorylation weakens interaction with MTOR within mTORC1 and mTORC2. Phosphorylated at Ser-286, Ser-287 and Ser-291 in response to mitogenic stimulation by MTOR: DEPTOR is either directly phosphorylated by MTOR or indirectly via proteins kinases that are activated by MTOR, such as CK1/CSNK1A1. Phosphorylation at Ser-286, Ser-287 and Ser-291 promotes ubiquitination by the SCF(BTRC) complex, followed by degradation. Phosphorylation at Ser-235 by MAPK3/ERK1 promotes deubiquitination by USP7, enhancing its stability. Phosphorylation at Tyr-291 by SYK impairs its interaction with MTOR, promoting mTORC1 and mTORC2 signaling. In terms of processing, ubiquitinated; leading to proteasomal degradation. Ubiquitination by the SCF(BTRC) and SCF(FBXW11) complexes following phosphorylation at Ser-286, Ser-287 and Ser-291 by MTOR, leads to its degradation by the proteasome. Deubiquitinated by OTUB1 in response to amino acid via a non-canonical mechanism, leading to DEPTOR stability. Deubiquitinated by USP7 following phosphorylation at Ser-235, promoting its stability.

The protein localises to the lysosome membrane. Its activity is regulated as follows. Inhibited upon phosphatidic acid-binding: phosphatidic acid produced upon mitogenic stimulation promotes DEPTOR dissociatiom from the mTORC1 and mTORC2 complexes, leading to their activation. Specifically binds unsaturated phosphatidic acid, such as 16:0-18:1, 18:0-18:1 and di-18:1. Inhibited when nutrients are present via a feedback loop: phosphorylation by MTOR promotes DEPTOR ubiquitination and degradation. In terms of biological role, negative regulator of the mTORC1 and mTORC2 complexes: inhibits the protein kinase activity of MTOR, thereby inactivating both complexes. DEPTOR inhibits mTORC1 and mTORC2 to induce autophagy. In contrast to AKT1S1/PRAS40, only partially inhibits mTORC1 activity. The protein is DEP domain-containing mTOR-interacting protein of Mus musculus (Mouse).